The following is a 202-amino-acid chain: Pyrrolidone-carboxylate peptidase (202 aa).

Residues E78, C141, and H165 contribute to the active site.

The protein belongs to the peptidase C15 family. Homotetramer.

The protein resides in the cytoplasm. The catalysed reaction is Release of an N-terminal pyroglutamyl group from a polypeptide, the second amino acid generally not being Pro.. Its function is as follows. Removes 5-oxoproline from various penultimate amino acid residues except L-proline. This is Pyrrolidone-carboxylate peptidase from Thermosipho melanesiensis (strain DSM 12029 / CIP 104789 / BI429).